The chain runs to 295 residues: Glutamyl-Q tRNA(Asp) synthetase (295 aa).

L-glutamate contacts are provided by residues 9-13 (RFAPT) and E45. A 'HIGH' region motif is present at residues 12–22 (PTPSGYLHFGS). The Zn(2+) site is built by C101, C103, Y115, and C119. Y172 and R190 together coordinate L-glutamate. The short motif at 228 to 232 (KLGKS) is the 'KMSKS' region element. K231 contacts ATP.

Belongs to the class-I aminoacyl-tRNA synthetase family. GluQ subfamily. It depends on Zn(2+) as a cofactor.

Functionally, catalyzes the tRNA-independent activation of glutamate in presence of ATP and the subsequent transfer of glutamate onto a tRNA(Asp). Glutamate is transferred on the 2-amino-5-(4,5-dihydroxy-2-cyclopenten-1-yl) moiety of the queuosine in the wobble position of the QUC anticodon. The protein is Glutamyl-Q tRNA(Asp) synthetase of Pseudomonas syringae pv. tomato (strain ATCC BAA-871 / DC3000).